The sequence spans 703 residues: Epidermal growth factor receptor (703 aa).

Positions 1–30 (MGVRSPLSASGPRGAAVLVLLLLGVALCSA) are cleaved as a signal peptide. Over 31–654 (VEEKKVCQGT…GCPNGSKTPS (624 aa)) the chain is Extracellular. A disulfide bridge links cysteine 37 with cysteine 64. N-linked (GlcNAc...) asparagine glycans are attached at residues asparagine 134, asparagine 190, and asparagine 200. Intrachain disulfides connect cysteine 164/cysteine 194, cysteine 197/cysteine 206, cysteine 201/cysteine 214, cysteine 222/cysteine 230, cysteine 226/cysteine 238, cysteine 239/cysteine 247, cysteine 243/cysteine 255, cysteine 258/cysteine 267, cysteine 271/cysteine 298, cysteine 302/cysteine 314, cysteine 318/cysteine 333, cysteine 336/cysteine 340, and cysteine 344/cysteine 369. Residues asparagine 359, asparagine 368, and asparagine 420 are each glycosylated (N-linked (GlcNAc...) asparagine). Cystine bridges form between cysteine 477/cysteine 506, cysteine 513/cysteine 522, cysteine 517/cysteine 530, cysteine 533/cysteine 542, cysteine 546/cysteine 562, cysteine 565/cysteine 581, cysteine 569/cysteine 589, cysteine 592/cysteine 601, cysteine 605/cysteine 627, cysteine 630/cysteine 638, and cysteine 634/cysteine 646. N-linked (GlcNAc...) asparagine glycans are attached at residues asparagine 573 and asparagine 578. Residues asparagine 613 and asparagine 633 are each glycosylated (N-linked (GlcNAc...) asparagine). A glycan (N-linked (GlcNAc...) asparagine) is linked at asparagine 648. A helical membrane pass occupies residues 655-667 (IAAGVVGGLLCLV). Residues 668 to 703 (VVGLGIGLYLRRRHIVRKRTLRRLLQERELVEPLTP) are Cytoplasmic-facing. 2 positions are modified to phosphothreonine: threonine 687 and threonine 702.

The protein belongs to the protein kinase superfamily. Tyr protein kinase family. EGF receptor subfamily. Binding of the ligand triggers homo- and/or heterodimerization of the receptor triggering its autophosphorylation. Phosphorylated. Autophosphorylates.

It is found in the cell membrane. The protein localises to the endoplasmic reticulum membrane. Its subcellular location is the golgi apparatus membrane. It localises to the nucleus membrane. The protein resides in the endosome. It is found in the endosome membrane. The protein localises to the nucleus. The catalysed reaction is L-tyrosyl-[protein] + ATP = O-phospho-L-tyrosyl-[protein] + ADP + H(+). Endocytosis and inhibition of the activated EGFR by phosphatases constitute immediate regulatory mechanisms. Moreover, inducible feedback inhibitors may constitute alternative regulatory mechanisms for the EGFR signaling. Functionally, receptor tyrosine kinase binding ligands of the EGF family and activating several signaling cascades to convert extracellular cues into appropriate cellular responses. Known ligands include EGF and TGFA/TGF-alpha. Ligand binding triggers receptor homo- and/or heterodimerization and autophosphorylation on key cytoplasmic residues. The phosphorylated receptor recruits adapter proteins like GRB2 which in turn activates complex downstream signaling cascades. Activates at least 4 major downstream signaling cascades including the RAS-RAF-MEK-ERK, PI3 kinase-AKT, PLCgamma-PKC and STATs modules. May also activate the NF-kappa-B signaling cascade. The polypeptide is Epidermal growth factor receptor (EGFR) (Gallus gallus (Chicken)).